Consider the following 869-residue polypeptide: Leucine--tRNA ligase (869 aa).

Positions 51–61 match the 'HIGH' region motif; the sequence is PYPSGRIHMGH. The short motif at 636-640 is the 'KMSKS' region element; sequence KMSKS. Lys639 lines the ATP pocket.

This sequence belongs to the class-I aminoacyl-tRNA synthetase family.

It localises to the cytoplasm. It carries out the reaction tRNA(Leu) + L-leucine + ATP = L-leucyl-tRNA(Leu) + AMP + diphosphate. The polypeptide is Leucine--tRNA ligase (Dinoroseobacter shibae (strain DSM 16493 / NCIMB 14021 / DFL 12)).